Here is a 337-residue protein sequence, read N- to C-terminus: Ornithine carbamoyltransferase, catabolic (337 aa).

Carbamoyl phosphate-binding positions include 57–60 (STRT), Q84, R108, and 135–138 (HPTQ). Residues N167, D231, and 235-236 (SM) contribute to the L-ornithine site. Carbamoyl phosphate-binding positions include 272–273 (CL) and R317.

Belongs to the aspartate/ornithine carbamoyltransferase superfamily. OTCase family.

Its subcellular location is the cytoplasm. It catalyses the reaction carbamoyl phosphate + L-ornithine = L-citrulline + phosphate + H(+). It participates in amino-acid degradation; L-arginine degradation via ADI pathway; carbamoyl phosphate from L-arginine: step 2/2. In terms of biological role, reversibly catalyzes the transfer of the carbamoyl group from carbamoyl phosphate (CP) to the N(epsilon) atom of ornithine (ORN) to produce L-citrulline. In Streptococcus suis (strain 89/1591), this protein is Ornithine carbamoyltransferase, catabolic.